The chain runs to 339 residues: DNA-directed RNA polymerase subunit alpha (339 aa).

The tract at residues 1–235 (MVIQKNWQEL…DQLQVFVNFE (235 aa)) is alpha N-terminal domain (alpha-NTD). Positions 251–339 (FNPALLKKVD…DLAKRFEEHY (89 aa)) are alpha C-terminal domain (alpha-CTD).

This sequence belongs to the RNA polymerase alpha chain family. In terms of assembly, homodimer. The RNAP catalytic core consists of 2 alpha, 1 beta, 1 beta' and 1 omega subunit. When a sigma factor is associated with the core the holoenzyme is formed, which can initiate transcription.

It catalyses the reaction RNA(n) + a ribonucleoside 5'-triphosphate = RNA(n+1) + diphosphate. In terms of biological role, DNA-dependent RNA polymerase catalyzes the transcription of DNA into RNA using the four ribonucleoside triphosphates as substrates. This is DNA-directed RNA polymerase subunit alpha from Methylorubrum extorquens (strain CM4 / NCIMB 13688) (Methylobacterium extorquens).